The chain runs to 164 residues: HTH-type transcriptional regulator IscR (164 aa).

Residues 2 to 131 form the HTH rrf2-type domain; sequence RLTSKGRYAV…NNITLDELVN (130 aa). Positions 28-51 form a DNA-binding region, H-T-H motif; that stretch reads LADISERQGISLSYLEQLFSRLRK. Residues Cys-92, Cys-98, and Cys-104 each coordinate [2Fe-2S] cluster.

It depends on [2Fe-2S] cluster as a cofactor.

Its function is as follows. Regulates the transcription of several operons and genes involved in the biogenesis of Fe-S clusters and Fe-S-containing proteins. The polypeptide is HTH-type transcriptional regulator IscR (Pectobacterium carotovorum subsp. carotovorum (strain PC1)).